A 512-amino-acid polypeptide reads, in one-letter code: Cytochrome P450 monooxygenase pbrB (512 aa).

A helical membrane pass occupies residues 6 to 29; it reads LSFPAAVGAAFGAFAIYVVARCIY. Cys-452 contributes to the heme binding site.

This sequence belongs to the cytochrome P450 family. It depends on heme as a cofactor.

It localises to the membrane. It functions in the pathway secondary metabolite biosynthesis; terpenoid biosynthesis. Functionally, cytochrome P450 monooxygenase; part of the gene cluster that mediates the biosynthesis of the sesquiterpenoid aspterric acid (AA), an inhibitor of dihydroxy-acid dehydratase (DHAD) effective as an herbicide. PbrB catalyzes the second step within the pathway and converts (-)-daucane produced by the terpene cyclase pbrA into an alpha-epoxy carboxylate intermediate which is further converted into the tricyclic aspterric acid by the cytochrome P450 monooxygenase pbrC. The chain is Cytochrome P450 monooxygenase pbrB from Penicillium brasilianum.